A 125-amino-acid polypeptide reads, in one-letter code: Basic leucine zipper transcriptional factor ATF-like (125 aa).

Residues 1-14 (MPHSSDSSDSSFSR) show a composition bias toward low complexity. Positions 1-58 (MPHSSDSSDSSFSRSPPPGKQDSSDDVRRVQRREKNRIAAQKSRQRQTQKADTLHLES) are disordered. One can recognise a bZIP domain in the interval 26 to 89 (DVRRVQRREK…KYFTSVLNSH (64 aa)). The tract at residues 28-50 (RRVQRREKNRIAAQKSRQRQTQK) is basic motif. Ser43 carries the phosphoserine modification. At Thr48 the chain carries Phosphothreonine. The segment at 54–75 (LHLESEDLEKQNAALRKEIKQL) is leucine-zipper.

The protein belongs to the bZIP family. In terms of assembly, heterodimer; mainly heterodimerizes with JUNB. The BATF-JUNB heterodimer interacts with IRF4 and IRF8. Interacts (via bZIP domain) with IRF4 and IRF8; the interaction is direct. Also forms heterodimers with JUN and JUND. Also interacts with IFI35. In terms of processing, phosphorylated on serine and threonine residues and at least one tyrosine residue. Phosphorylation at Ser-43 inhibit DNA binding activity and transforms it as a negative regulator of AP-1 mediated transcription. Post-translationally, phosphorylated. In terms of tissue distribution, expressed at highest levels in lung, and at lower levels in placenta, liver, kidney, spleen, and peripheral blood. Detected in SW480 colorectal cancer cell line and several hematopoietic tumor cell lines, including Raji Burkitt's lymphoma. Strongly expressed in mature B- and T-lymphocytes. Also expressed in moderate levels in lymph node and appendix and at low levels in thymus and bone marrow.

The protein resides in the nucleus. It localises to the cytoplasm. Its function is as follows. AP-1 family transcription factor that controls the differentiation of lineage-specific cells in the immune system: specifically mediates the differentiation of T-helper 17 cells (Th17), follicular T-helper cells (TfH), CD8(+) dendritic cells and class-switch recombination (CSR) in B-cells. Acts via the formation of a heterodimer with JUNB that recognizes and binds DNA sequence 5'-TGA[CG]TCA-3'. The BATF-JUNB heterodimer also forms a complex with IRF4 (or IRF8) in immune cells, leading to recognition of AICE sequence (5'-TGAnTCA/GAAA-3'), an immune-specific regulatory element, followed by cooperative binding of BATF and IRF4 (or IRF8) and activation of genes. Controls differentiation of T-helper cells producing interleukin-17 (Th17 cells) by binding to Th17-associated gene promoters: regulates expression of the transcription factor RORC itself and RORC target genes such as IL17 (IL17A or IL17B). Also involved in differentiation of follicular T-helper cells (TfH) by directing expression of BCL6 and MAF. In B-cells, involved in class-switch recombination (CSR) by controlling the expression of both AICDA and of germline transcripts of the intervening heavy-chain region and constant heavy-chain region (I(H)-C(H)). Following infection, can participate in CD8(+) dendritic cell differentiation via interaction with IRF4 and IRF8 to mediate cooperative gene activation. Regulates effector CD8(+) T-cell differentiation by regulating expression of SIRT1. Following DNA damage, part of a differentiation checkpoint that limits self-renewal of hematopoietic stem cells (HSCs): up-regulated by STAT3, leading to differentiation of HSCs, thereby restricting self-renewal of HSCs. The polypeptide is Basic leucine zipper transcriptional factor ATF-like (BATF) (Homo sapiens (Human)).